Consider the following 488-residue polypeptide: N-succinylglutamate 5-semialdehyde dehydrogenase 2 (488 aa).

221 to 226 (GSSNTG) provides a ligand contact to NAD(+). Active-site residues include Glu244 and Cys278.

The protein belongs to the aldehyde dehydrogenase family. AstD subfamily.

It catalyses the reaction N-succinyl-L-glutamate 5-semialdehyde + NAD(+) + H2O = N-succinyl-L-glutamate + NADH + 2 H(+). It participates in amino-acid degradation; L-arginine degradation via AST pathway; L-glutamate and succinate from L-arginine: step 4/5. In terms of biological role, catalyzes the NAD-dependent reduction of succinylglutamate semialdehyde into succinylglutamate. The chain is N-succinylglutamate 5-semialdehyde dehydrogenase 2 from Pseudoalteromonas translucida (strain TAC 125).